The following is a 326-amino-acid chain: Fos-related antigen 2 (326 aa).

Position 1 is an N-acetylmethionine (M1). The interval 1–39 is disordered; sequence MYQDYPGNFDTSSRGSSGSPAHAESYSSGGGGQQKFRVD. Polar residues predominate over residues 9–19; the sequence is FDTSSRGSSGS. Residue K35 forms a Glycyl lysine isopeptide (Lys-Gly) (interchain with G-Cter in SUMO2) linkage. At K104 the chain carries N6-acetyllysine; alternate. K104 participates in a covalent cross-link: Glycyl lysine isopeptide (Lys-Gly) (interchain with G-Cter in SUMO2); alternate. Disordered stretches follow at residues 111 to 131, 193 to 244, and 289 to 326; these read GRRRRDEQLSPEEEEKRRIRR, ISPE…QRSV, and EQESPASPSESCSKAHRRSSSSGDQSSDSLNSPTLLAL. At S120 the chain carries Phosphoserine. The bZIP domain maps to 124 to 187; the sequence is EEKRRIRRER…EKLEFMLVAH (64 aa). Residues 126-128 are basic motif; it reads KRR. Residues 129–136 form a leucine-zipper region; that stretch reads IRRERNKL. S200 carries the post-translational modification Phosphoserine. A compositionally biased stretch (polar residues) spans 201 to 211; the sequence is PPTSGLQSLRG. K222 is covalently cross-linked (Glycyl lysine isopeptide (Lys-Gly) (interchain with G-Cter in SUMO2); alternate). K222 is covalently cross-linked (Glycyl lysine isopeptide (Lys-Gly) (interchain with G-Cter in SUMO1); alternate). S230 is modified (phosphoserine). K239 participates in a covalent cross-link: Glycyl lysine isopeptide (Lys-Gly) (interchain with G-Cter in SUMO2). 2 positions are modified to phosphoserine: S308 and S320. Positions 308 to 320 are enriched in low complexity; it reads SSSGDQSSDSLNS.

This sequence belongs to the bZIP family. Fos subfamily. As to quaternary structure, heterodimer. Interacts with the BAF multiprotein chromatin-remodeling complex subunits SMARCB1 and SMARCD1. Interacts with ARID1A and JUN. As to expression, expressed in the brain cortex. Expressed at night in pineal gland (at protein level). Also expressed in osteoblasts (at protein level).

Its subcellular location is the nucleus. In terms of biological role, controls osteoclast survival and size. As a dimer with JUN, activates LIF transcription. Activates CEBPB transcription in PGE2-activated osteoblasts. This chain is Fos-related antigen 2 (Fosl2), found in Rattus norvegicus (Rat).